The following is a 430-amino-acid chain: Tapasin (430 aa).

An N-terminal signal peptide occupies residues 1-15 (MAAGLRLLLAGLCWS). Over 16 to 399 (QFRVEDAASP…TEGPHLEDIT (384 aa)) the chain is Lumenal. An intrachain disulfide couples C34 to C99. Positions 61–128 (GDAETPPEPG…PDARSPPTAG (68 aa)) are disordered. A glycan (N-linked (GlcNAc...) asparagine) is linked at N78. Polar residues predominate over residues 101–111 (LNPTNPQTGSD). 2 Ig-like C1-type domains span residues 139 to 273 (PQYG…LQLH) and 278 to 382 (PKVT…MRVS). Cysteines 299 and 368 form a disulfide. The segment at 316–342 (RAGGSGTSQSPRDTVMDSWTSGHRQAA) is disordered. The span at 322–338 (TSQSPRDTVMDSWTSGH) shows a compositional bias: polar residues. The chain crosses the membrane as a helical span at residues 400-417 (GLFLVAFVLCGLIRWLYP). Over 418 to 430 (KAARPKEETKKSQ) the chain is Cytoplasmic.

As to quaternary structure, interacts with TAP1 and is thus a subunit of the TAP complex. Interaction with TAP1 is TAP2 independent and is required for efficient peptide-TAP interaction. Obligatory mediator for the interaction between newly assembled MHC class I molecules, calreticulin, ERp57 and TAP. Up to 4 MHC class I/tapasin complexes bind to 1 TAP.

The protein resides in the endoplasmic reticulum membrane. In terms of biological role, involved in the association of MHC class I with transporter associated with antigen processing (TAP) and in the assembly of MHC class I with peptide (peptide loading). The sequence is that of Tapasin (TAPBP) from Gallus gallus (Chicken).